A 605-amino-acid polypeptide reads, in one-letter code: Alpha-1,3-galactosidase A (605 aa).

An N-terminal signal peptide occupies residues 1–20; the sequence is MKKYLHILPACFLFYAAAHA. PbH1 repeat units lie at residues 256–278, 312–334, 421–443, 444–466, 477–507, and 517–547; these read SKNI…VSQY, KGKV…NVHG, TPEV…LVTT, PRKV…LIEA, VKDV…HPSN, and HQNI…LFRN.

Belongs to the glycosyl hydrolase 110 family. A subfamily.

It carries out the reaction Hydrolysis of terminal, non-reducing branched (1-&gt;3)-alpha-D-galactosidic residues, producing free D-galactose.. It catalyses the reaction Hydrolysis of terminal, non-reducing alpha-D-galactose residues in alpha-D-galactosides, including galactose oligosaccharides, galactomannans and galactolipids.. In terms of biological role, alpha-galactosidase that specifically removes branched alpha-1,3-linked galactose residues present in blood group B antigens. Has no activity toward linear alpha-1,3-linked galactose residues. The chain is Alpha-1,3-galactosidase A (glaA) from Bacteroides fragilis (strain ATCC 25285 / DSM 2151 / CCUG 4856 / JCM 11019 / LMG 10263 / NCTC 9343 / Onslow / VPI 2553 / EN-2).